The sequence spans 342 residues: Ferredoxin--NADP reductase (342 aa).

Cysteine 17, aspartate 36, glutamine 44, tyrosine 49, isoleucine 89, phenylalanine 124, aspartate 289, and threonine 330 together coordinate FAD.

The protein belongs to the ferredoxin--NADP reductase type 2 family. As to quaternary structure, homodimer. The cofactor is FAD.

It carries out the reaction 2 reduced [2Fe-2S]-[ferredoxin] + NADP(+) + H(+) = 2 oxidized [2Fe-2S]-[ferredoxin] + NADPH. The protein is Ferredoxin--NADP reductase of Rhodopseudomonas palustris (strain BisB5).